Here is a 119-residue protein sequence, read N- to C-terminus: Large ribosomal subunit protein bL20 (119 aa).

Belongs to the bacterial ribosomal protein bL20 family.

Functionally, binds directly to 23S ribosomal RNA and is necessary for the in vitro assembly process of the 50S ribosomal subunit. It is not involved in the protein synthesizing functions of that subunit. The polypeptide is Large ribosomal subunit protein bL20 (Granulibacter bethesdensis (strain ATCC BAA-1260 / CGDNIH1)).